A 450-amino-acid chain; its full sequence is MRECISVHIGQAGIQVGNACWELYCLEHGIQPDGQVPGDKTAGHHDDAFSTFFSQTGAGKHVPRAIFVDLEPTVIDEVRTGTYRQLFHPEQLISGKEDAANNFARGHYTIGKEIVDLCLDRIRKLADNCTGLQGFLVFNAVGGGTGSGLGSLLLERLSVEYGKKSKLGFTVYPSPQVSTSVVEPYNSVLSTHSLLEHTDVSILLDNEAIYDICRRSLDIERPNYSNLNRLVSQVISSLTASLRFDGALNVDVNEFQTNLVPYPRIHFMLSSYAPVISSAKAFHEQLSVAEITSSAFEPASMMVKCDPRHGKYMACCLMYRGDVVPKDVNAAVATIKTKRTIQFVDWCPTGFKCGINYQAPTVVPGADLAKVQRAVCMISNSTSVVEVFSRINSKFDLMYAKRAFVHWYVGEGMEEGEFSEAREDLAALEKDYEEVAAEGGSDDGDEEEEY.

Q11 is a binding site for GTP. K40 bears the N6-acetyllysine mark. E71, G144, T145, T179, N206, and N228 together coordinate GTP. A Mg(2+)-binding site is contributed by E71. The active site involves E254.

It belongs to the tubulin family. In terms of assembly, dimer of alpha and beta chains. A typical microtubule is a hollow water-filled tube with an outer diameter of 25 nm and an inner diameter of 15 nM. Alpha-beta heterodimers associate head-to-tail to form protofilaments running lengthwise along the microtubule wall with the beta-tubulin subunit facing the microtubule plus end conferring a structural polarity. Microtubules usually have 13 protofilaments but different protofilament numbers can be found in some organisms and specialized cells. The cofactor is Mg(2+). Undergoes a tyrosination/detyrosination cycle, the cyclic removal and re-addition of a C-terminal tyrosine residue by the enzymes tubulin tyrosine carboxypeptidase (TTCP) and tubulin tyrosine ligase (TTL), respectively. In terms of processing, acetylation of alpha chains at Lys-40 stabilizes microtubules and affects affinity and processivity of microtubule motors. This modification has a role in multiple cellular functions, ranging from cell motility, cell cycle progression or cell differentiation to intracellular trafficking and signaling.

It is found in the cytoplasm. It localises to the cytoskeleton. The catalysed reaction is GTP + H2O = GDP + phosphate + H(+). In terms of biological role, tubulin is the major constituent of microtubules, a cylinder consisting of laterally associated linear protofilaments composed of alpha- and beta-tubulin heterodimers. Microtubules grow by the addition of GTP-tubulin dimers to the microtubule end, where a stabilizing cap forms. Below the cap, tubulin dimers are in GDP-bound state, owing to GTPase activity of alpha-tubulin. The sequence is that of Tubulin alpha-3 chain (TUBA3) from Zea mays (Maize).